Here is a 194-residue protein sequence, read N- to C-terminus: 3-isopropylmalate dehydratase small subunit (194 aa).

Belongs to the LeuD family. LeuD type 1 subfamily. Heterodimer of LeuC and LeuD.

It carries out the reaction (2R,3S)-3-isopropylmalate = (2S)-2-isopropylmalate. Its pathway is amino-acid biosynthesis; L-leucine biosynthesis; L-leucine from 3-methyl-2-oxobutanoate: step 2/4. Its function is as follows. Catalyzes the isomerization between 2-isopropylmalate and 3-isopropylmalate, via the formation of 2-isopropylmaleate. In Brevibacillus brevis (strain 47 / JCM 6285 / NBRC 100599), this protein is 3-isopropylmalate dehydratase small subunit.